The chain runs to 370 residues: Ornithine carbamoyltransferase, mitochondrial (370 aa).

Residues 1-38 constitute a mitochondrion transit peptide; it reads MPSPLRTAPQPPLRAFHNPPALRRLYSSTSHSAATPAT. Residues 97–100, Arg-148, His-175, and Gln-178 each bind carbamoyl phosphate; that span reads STRT. Asn-216, Asp-282, Ser-286, and Met-287 together coordinate L-ornithine. Cys-324 serves as the catalytic Proton acceptor. Residues 324-325 and Arg-351 contribute to the carbamoyl phosphate site; that span reads CL.

It belongs to the aspartate/ornithine carbamoyltransferase superfamily. OTCase family. In terms of assembly, homotrimer.

It is found in the mitochondrion matrix. It catalyses the reaction carbamoyl phosphate + L-ornithine = L-citrulline + phosphate + H(+). The protein operates within amino-acid biosynthesis; L-arginine biosynthesis; L-arginine from L-ornithine and carbamoyl phosphate: step 1/3. This chain is Ornithine carbamoyltransferase, mitochondrial (argB), found in Aspergillus niger.